Consider the following 444-residue polypeptide: Multidrug resistance protein MdtA (444 aa).

Positions 1 to 20 (MKSQSKRTSRLFVFVGVVVA) are cleaved as a signal peptide. Residues 37-52 (NNTSGAQQSARGQDTS) are compositionally biased toward polar residues. 2 disordered regions span residues 37–60 (NNTS…RNTP) and 399–444 (PRSA…AEKS). The segment covering 409–419 (ASAEKAAAEAE) has biased composition (low complexity). The span at 435 to 444 (ARSTTAAEKS) shows a compositional bias: polar residues.

It belongs to the membrane fusion protein (MFP) (TC 8.A.1) family. As to quaternary structure, part of a tripartite efflux system composed of MdtA, MdtB and MdtC.

Its subcellular location is the cell inner membrane. The chain is Multidrug resistance protein MdtA from Yersinia pseudotuberculosis serotype I (strain IP32953).